Reading from the N-terminus, the 74-residue chain is DNA-directed RNA polymerase subunit omega (74 aa).

It belongs to the RNA polymerase subunit omega family. As to quaternary structure, the RNAP catalytic core consists of 2 alpha, 1 beta, 1 beta' and 1 omega subunit. When a sigma factor is associated with the core the holoenzyme is formed, which can initiate transcription.

It carries out the reaction RNA(n) + a ribonucleoside 5'-triphosphate = RNA(n+1) + diphosphate. In terms of biological role, promotes RNA polymerase assembly. Latches the N- and C-terminal regions of the beta' subunit thereby facilitating its interaction with the beta and alpha subunits. The chain is DNA-directed RNA polymerase subunit omega from Solidesulfovibrio magneticus (strain ATCC 700980 / DSM 13731 / RS-1) (Desulfovibrio magneticus).